The primary structure comprises 328 residues: MPLHNLTRFPRLEFIGAPTPLEYLPRFSDYLGREIFIKRDDVTPMAMGGNKLRKLEFLAADALREGADTLITAGAIQSNHVRQTAAVAAKLGLHCVALLENPIGTTAENYLTNGNRLLLDLFNTQIEMCDALTDPNAQLEELATRVEAQGFRPYVIPVGGSNALGALGYVESALEIAQQCEGAVNISSVVVASGSAGTHAGLAVGLEHLLPESELIGVTVSRSVADQLPKVVNLQQAIAKELELTASAEILLWDDYFAPGYGVPNDEGMEAVKLLARFEGILLDPVYTGKAMAGLIDGISQKRFKDEGPILFIHTGGAPALFAYHPHV.

Lys-51 is subject to N6-(pyridoxal phosphate)lysine.

The protein belongs to the ACC deaminase/D-cysteine desulfhydrase family. In terms of assembly, homodimer. The cofactor is pyridoxal 5'-phosphate.

The enzyme catalyses D-cysteine + H2O = hydrogen sulfide + pyruvate + NH4(+) + H(+). Its function is as follows. Catalyzes the alpha,beta-elimination reaction of D-cysteine and of several D-cysteine derivatives. It could be a defense mechanism against D-cysteine. In Escherichia coli O9:H4 (strain HS), this protein is D-cysteine desulfhydrase.